We begin with the raw amino-acid sequence, 333 residues long: Adenosine deaminase (333 aa).

Positions 12 and 14 each coordinate Zn(2+). Residues H14, D16, and G170 each contribute to the substrate site. H197 contributes to the Zn(2+) binding site. Catalysis depends on E200, which acts as the Proton donor. D278 contacts Zn(2+). D279 contributes to the substrate binding site.

It belongs to the metallo-dependent hydrolases superfamily. Adenosine and AMP deaminases family. Adenosine deaminase subfamily. It depends on Zn(2+) as a cofactor.

It carries out the reaction adenosine + H2O + H(+) = inosine + NH4(+). It catalyses the reaction 2'-deoxyadenosine + H2O + H(+) = 2'-deoxyinosine + NH4(+). Catalyzes the hydrolytic deamination of adenosine and 2-deoxyadenosine. This chain is Adenosine deaminase, found in Salmonella dublin (strain CT_02021853).